We begin with the raw amino-acid sequence, 321 residues long: Lipoyl synthase (321 aa).

The [4Fe-4S] cluster site is built by Cys-68, Cys-73, Cys-79, Cys-94, Cys-98, Cys-101, and Ser-308. The region spanning 80–297 (FNHGTATFMI…KALADELGFT (218 aa)) is the Radical SAM core domain.

It belongs to the radical SAM superfamily. Lipoyl synthase family. Requires [4Fe-4S] cluster as cofactor.

The protein resides in the cytoplasm. It catalyses the reaction [[Fe-S] cluster scaffold protein carrying a second [4Fe-4S](2+) cluster] + N(6)-octanoyl-L-lysyl-[protein] + 2 oxidized [2Fe-2S]-[ferredoxin] + 2 S-adenosyl-L-methionine + 4 H(+) = [[Fe-S] cluster scaffold protein] + N(6)-[(R)-dihydrolipoyl]-L-lysyl-[protein] + 4 Fe(3+) + 2 hydrogen sulfide + 2 5'-deoxyadenosine + 2 L-methionine + 2 reduced [2Fe-2S]-[ferredoxin]. It functions in the pathway protein modification; protein lipoylation via endogenous pathway; protein N(6)-(lipoyl)lysine from octanoyl-[acyl-carrier-protein]: step 2/2. Its function is as follows. Catalyzes the radical-mediated insertion of two sulfur atoms into the C-6 and C-8 positions of the octanoyl moiety bound to the lipoyl domains of lipoate-dependent enzymes, thereby converting the octanoylated domains into lipoylated derivatives. This Shewanella frigidimarina (strain NCIMB 400) protein is Lipoyl synthase.